Reading from the N-terminus, the 105-residue chain is Nitrogen fixation nifHD region glnB-like protein 1 (105 aa).

This sequence belongs to the P(II) protein family.

Functionally, could be involved in the regulation of nitrogen fixation. The polypeptide is Nitrogen fixation nifHD region glnB-like protein 1 (glnBI) (Methanococcus maripaludis (Methanococcus deltae)).